The following is a 284-amino-acid chain: Acetylglutamate kinase (284 aa).

Substrate contacts are provided by residues 54–55, Arg76, and Asn179; that span reads GG.

It belongs to the acetylglutamate kinase family. ArgB subfamily.

Its subcellular location is the cytoplasm. It catalyses the reaction N-acetyl-L-glutamate + ATP = N-acetyl-L-glutamyl 5-phosphate + ADP. It participates in amino-acid biosynthesis; L-arginine biosynthesis; N(2)-acetyl-L-ornithine from L-glutamate: step 2/4. Catalyzes the ATP-dependent phosphorylation of N-acetyl-L-glutamate. The chain is Acetylglutamate kinase from Sorangium cellulosum (strain So ce56) (Polyangium cellulosum (strain So ce56)).